The primary structure comprises 493 residues: Aluminum-activated malate transporter 1 (493 aa).

The next 5 membrane-spanning stretches (helical) occupy residues 28 to 48 (VGLALVLVSSFYYYQPFGPFT), 51 to 71 (FGINAMWAVMTVVVVFEFSVG), 104 to 124 (TVEPILLVMLVFVQAALSTFV), 133 to 153 (KFDYGILIFILTFALISLSGF), and 169 to 189 (VVIGGVSCILISIFVCPVWAG). Residues Ser320 and Ser327 each carry the phosphoserine modification. Thr385 is subject to Phosphothreonine. A compositionally biased stretch (basic and acidic residues) spans 441-452 (DNDRSNNVDDSR). The tract at residues 441–460 (DNDRSNNVDDSRGGSSQDSC) is disordered.

Belongs to the aromatic acid exporter (TC 2.A.85) family. Phosphorylated. A reversible phosphorylation is required for activation. As to expression, expressed in roots, but not in shoots. Detected in the root apex in absence of aluminum stress and in root apices, the stele and endodermis of the elongating zone of primary and lateral roots after aluminum stress. Not expressed in cortical and epidermal cells.

Its subcellular location is the cell membrane. With respect to regulation, activated by external aluminum. In terms of biological role, malate transporter critical for aluminum tolerance. The STOP1 transcription factor is required for ALMT1 expression. The polypeptide is Aluminum-activated malate transporter 1 (ALMT1) (Arabidopsis thaliana (Mouse-ear cress)).